The primary structure comprises 523 residues: Cyclin-dependent kinase 17 (523 aa).

The residue at position 9 (Ser9) is a Phosphoserine. The disordered stretch occupies residues 31-55 (IEESSSKDNEPIVKNGRPPTSHSMH). Phosphoserine is present on residues Ser80, Ser92, and Ser105. Residues 103–123 (MGSDGESDQASGTSSDEVQSP) are disordered. Over residues 110–123 (DQASGTSSDEVQSP) the composition is skewed to polar residues. 4 positions are modified to phosphoserine: Ser137, Ser146, Ser165, and Ser180. Residues 192–473 (YIKLEKLGEG…AEEAMKHVYF (282 aa)) form the Protein kinase domain. ATP-binding positions include 198-206 (LGEGTYATV) and Lys221. Catalysis depends on Asp313, which acts as the Proton acceptor.

Belongs to the protein kinase superfamily. CMGC Ser/Thr protein kinase family. CDC2/CDKX subfamily. Found in a complex containing CABLES1, CDK16 and TDRD7. Interacts with TDRD7. In terms of tissue distribution, brain specific. Within the brain it is concentrated in the neuronal layers of the hippocampus and olfactory bulb, which mostly consist of post-mitotic neurons.

The catalysed reaction is L-seryl-[protein] + ATP = O-phospho-L-seryl-[protein] + ADP + H(+). The enzyme catalyses L-threonyl-[protein] + ATP = O-phospho-L-threonyl-[protein] + ADP + H(+). Its function is as follows. May play a role in terminally differentiated neurons. Has a Ser/Thr-phosphorylating activity for histone H1. The sequence is that of Cyclin-dependent kinase 17 (Cdk17) from Rattus norvegicus (Rat).